Reading from the N-terminus, the 362-residue chain is 3-dehydroquinate synthase (362 aa).

NAD(+) contacts are provided by residues 71 to 76 (DGERYK), 105 to 109 (GVIGD), 129 to 130 (TT), Lys142, Lys151, and 169 to 172 (CLKT). The Zn(2+) site is built by Glu184, His247, and His264.

The protein belongs to the sugar phosphate cyclases superfamily. Dehydroquinate synthase family. Requires Co(2+) as cofactor. Zn(2+) serves as cofactor. It depends on NAD(+) as a cofactor.

The protein resides in the cytoplasm. It carries out the reaction 7-phospho-2-dehydro-3-deoxy-D-arabino-heptonate = 3-dehydroquinate + phosphate. It functions in the pathway metabolic intermediate biosynthesis; chorismate biosynthesis; chorismate from D-erythrose 4-phosphate and phosphoenolpyruvate: step 2/7. In terms of biological role, catalyzes the conversion of 3-deoxy-D-arabino-heptulosonate 7-phosphate (DAHP) to dehydroquinate (DHQ). In Salmonella arizonae (strain ATCC BAA-731 / CDC346-86 / RSK2980), this protein is 3-dehydroquinate synthase.